The following is a 314-amino-acid chain: MSSKANHAKTVICGIINVTPDSFSDGGQFFALEQALQQARKLIAEGASMLDIGGESTRPGSSYVEIEEEIQRVVPVIKAIRKESDVLISIDTWKSQVAEAALAAGADLVNDITGLMGDEKMPHVVAEARAQVVIMFNPVMARPQHPSSLIFPHFGFGQAFTEEELADFETLPIEELMEAFFERALARAAEAGIAPENILLDPGIGFGLTKKENLLLLRDLDKLHQKGYPIFLGVSRKRFVINILEENGFEVNPETELGFRNRDTASAHVTSIAARQGVEVVRVHDVASHRMAVEIASAIRLADEAENLDLKQYK.

Residues 10–294 (TVICGIINVT…DVASHRMAVE (285 aa)) form the Pterin-binding domain. Asn-17 is a binding site for Mg(2+). (7,8-dihydropterin-6-yl)methyl diphosphate is bound by residues Asp-91, Asn-110, Asp-201, Lys-237, and 282-284 (RVH).

This sequence belongs to the DHPS family. In terms of assembly, homodimer. Mg(2+) serves as cofactor.

The catalysed reaction is (7,8-dihydropterin-6-yl)methyl diphosphate + 4-aminobenzoate = 7,8-dihydropteroate + diphosphate. It functions in the pathway cofactor biosynthesis; tetrahydrofolate biosynthesis; 7,8-dihydrofolate from 2-amino-4-hydroxy-6-hydroxymethyl-7,8-dihydropteridine diphosphate and 4-aminobenzoate: step 1/2. With respect to regulation, is potently inhibited by sulfonamides, with Ki values between 25 nM and 850 nM. Functionally, catalyzes the condensation of para-aminobenzoate (pABA) with 6-hydroxymethyl-7,8-dihydropterin diphosphate (DHPt-PP) to form 7,8-dihydropteroate, the immediate precursor of folate derivatives. In terms of biological role, is the target for the sulfonamide group of antimicrobial drugs. Sulfonamide drugs act as pABA analogs, they inhibit the reaction by acting as alternative substrates, leading to a 'dead end' sulfa-pterin product. In Streptococcus pneumoniae (strain ATCC BAA-255 / R6), this protein is Dihydropteroate synthase (sulA).